Consider the following 888-residue polypeptide: DNA mismatch repair protein MutS (888 aa).

A disordered region spans residues 249 to 271 (IGQRPPLSPPSREASGSTMAIDP). Position 638–645 (638–645 (GPNMAGKS)) interacts with ATP.

It belongs to the DNA mismatch repair MutS family.

In terms of biological role, this protein is involved in the repair of mismatches in DNA. It is possible that it carries out the mismatch recognition step. This protein has a weak ATPase activity. The protein is DNA mismatch repair protein MutS of Nitrobacter winogradskyi (strain ATCC 25391 / DSM 10237 / CIP 104748 / NCIMB 11846 / Nb-255).